Here is a 705-residue protein sequence, read N- to C-terminus: Dolichyl-diphosphooligosaccharide--protein glycosyltransferase subunit STT3A (705 aa).

Over 1-17 (MTKLGFLRLSYEKQDTL) the chain is Cytoplasmic. The helical transmembrane segment at 18–38 (LKLLILSMAAVLSFSTRLFAV) threads the bilayer. The Lumenal portion of the chain corresponds to 39–119 (LRFESVIHEF…IDIRNVCVFL (81 aa)). Positions 47–49 (EFD) match the DXD motif 1 motif. Asp-49 contacts Mn(2+). The chain crosses the membrane as a helical span at residues 120 to 138 (APLFSSFTTIVTYHLTKEL). The Cytoplasmic portion of the chain corresponds to 139 to 140 (KD). The helical transmembrane segment at 141 to 158 (AGAGLLAAAMIAVVPGYI) threads the bilayer. Residues 159–169 (SRSVAGSYDNE) are Lumenal-facing. Mn(2+)-binding residues include Asp-167 and Glu-169. A DXD motif 2 motif is present at residues 167 to 169 (DNE). The chain crosses the membrane as a helical span at residues 170–189 (GIAIFCMLLTYYMWIKAVKT). At 190-191 (GS) the chain is on the cytoplasmic side. The helical transmembrane segment at 192-206 (IYWAAKCALAYFYMV) threads the bilayer. Topologically, residues 207-211 (SSWGG) are lumenal. A helical membrane pass occupies residues 212–228 (YVFLINLIPLHVLVLML). The Cytoplasmic segment spans residues 229 to 233 (TGRFS). The chain crosses the membrane as a helical span at residues 234–259 (HRIYVAYCTVYCLGTILSMQISFVGF). Residues 260–267 (QPVLSSEH) are Lumenal-facing. The chain crosses the membrane as a helical span at residues 268–287 (MAAFGVFGLCQIHAFVDYLR). At 288-300 (SKLNPQQFEVLFR) the chain is on the cytoplasmic side. Residues 301–321 (SVISLVGFVLLTVGALLMLTG) form a helical membrane-spanning segment. The Lumenal portion of the chain corresponds to 322 to 356 (KISPWTGRFYSLLDPSYAKNNIPIIASVSEHQPTT). The SVSE motif signature appears at 348-351 (SVSE). A helical membrane pass occupies residues 357–379 (WSSYYFDLQLLVFMFPVGLYYCF). At 380-385 (SNLSDA) the chain is on the cytoplasmic side. The helical transmembrane segment at 386–402 (RIFIIMYGVTSMYFSAV) threads the bilayer. At 403-406 (MVRL) the chain is on the lumenal side. Arg-405 contributes to the dolichyl diphosphooligosaccharide binding site. Residues 407 to 428 (MLVLAPVMCILSGIGVSQVLST) form a helical membrane-spanning segment. The Cytoplasmic segment spans residues 429–453 (YMKNLDISRPDKKSKKQQDSTYPIK). The chain crosses the membrane as a helical span at residues 454–473 (NEVASGMILVMAFFLITYTF). Residues 474 to 705 (HSTWVTSEAY…DLDNRGLSRT (232 aa)) are Lumenal-facing. Residues 525 to 527 (WWD) are interacts with target acceptor peptide in protein substrate. The short motif at 525-529 (WWDYG) is the WWDYG motif element. Tyr-530 serves as a coordination point for dolichyl diphosphooligosaccharide. Residues Asn-537 and Asn-544 are each glycosylated (N-linked (GlcNAc...) asparagine). Residue Asn-548 is glycosylated (N-linked (GlcNAc...) (high mannose) asparagine). The DK motif signature appears at 592-599 (DINKFLWM).

The protein belongs to the STT3 family. Component of the oligosaccharyltransferase (OST) complex. There are 2 OST complexes, OST-A and OST-B, which contain STT3A or STT3B as catalytic subunit, respectively. OST-A and OST-B contain common core subunits RPN1, RPN2, OST48, OST4, DAD1 and TMEM258, and OST-A contains DC2/OSTC and KRTCAP2/KCP2 specific accessory subunits. OST-A complex assembly occurs through the formation of 3 subcomplexes. Subcomplex 1 contains RPN1 and TMEM258, subcomplex 2 contains the OST-A-specific subunits STT3A, DC2/OSTC, and KCP2 as well as the core subunit OST4, and subcomplex 3 contains RPN2, DAD1, and OST48. The OST-A complex can form stable complexes with the Sec61 complex or with both the Sec61 and TRAP complexes. Requires Mg(2+) as cofactor. Mn(2+) is required as a cofactor.

The protein resides in the endoplasmic reticulum. Its subcellular location is the endoplasmic reticulum membrane. It carries out the reaction a di-trans,poly-cis-dolichyl diphosphooligosaccharide + L-asparaginyl-[protein] = N(4)-(oligosaccharide-(1-&gt;4)-N-acetyl-beta-D-glucosaminyl-(1-&gt;4)-N-acetyl-beta-D-glucosaminyl)-L-asparaginyl-[protein] + a di-trans,poly-cis-dolichyl diphosphate + H(+). It functions in the pathway protein modification; protein glycosylation. Functionally, catalytic subunit of the oligosaccharyl transferase (OST) complex that catalyzes the initial transfer of a defined glycan (Glc(3)Man(9)GlcNAc(2) in eukaryotes) from the lipid carrier dolichol-pyrophosphate to an asparagine residue within an Asn-X-Ser/Thr consensus motif in nascent polypeptide chains, the first step in protein N-glycosylation. N-glycosylation occurs cotranslationally and the complex associates with the Sec61 complex at the channel-forming translocon complex that mediates protein translocation across the endoplasmic reticulum (ER). All subunits are required for a maximal enzyme activity. This subunit contains the active site and the acceptor peptide and donor lipid-linked oligosaccharide (LLO) binding pockets. STT3A is present in the majority of OST complexes and mediates cotranslational N-glycosylation of most sites on target proteins, while STT3B-containing complexes are required for efficient post-translational glycosylation and mediate glycosylation of sites that have been skipped by STT3A. STT3A-containing OST-A complex is also required to prevent hyperglycosylation of some target proteins by preventing glycosylation of facultative sites before folding of target proteins is completed. The chain is Dolichyl-diphosphooligosaccharide--protein glycosyltransferase subunit STT3A from Mus musculus (Mouse).